The sequence spans 934 residues: uncharacterized protein (934 aa).

An N-terminal signal peptide occupies residues 1–24; that stretch reads MKLKKRYLLLGSTLTVSAALILSA. Cys25 carries the N-palmitoyl cysteine lipid modification. Cys25 carries the S-diacylglycerol cysteine lipid modification. The disordered stretch occupies residues 111 to 131; sequence SGLKGRAQKNGSTDSSDGSSK. The span at 119 to 131 shows a compositional bias: polar residues; the sequence is KNGSTDSSDGSSK.

It localises to the cell membrane. This is an uncharacterized protein from Mycoplasma genitalium (strain ATCC 33530 / DSM 19775 / NCTC 10195 / G37) (Mycoplasmoides genitalium).